A 216-amino-acid chain; its full sequence is Octanoyltransferase (216 aa).

The BPL/LPL catalytic domain occupies Lys24–Asn212. Substrate contacts are provided by residues Arg69–His76, Ser140–Gly142, and Gly153–Ala155. Catalysis depends on Cys171, which acts as the Acyl-thioester intermediate.

It belongs to the LipB family.

The protein resides in the cytoplasm. The enzyme catalyses octanoyl-[ACP] + L-lysyl-[protein] = N(6)-octanoyl-L-lysyl-[protein] + holo-[ACP] + H(+). It participates in protein modification; protein lipoylation via endogenous pathway; protein N(6)-(lipoyl)lysine from octanoyl-[acyl-carrier-protein]: step 1/2. Catalyzes the transfer of endogenously produced octanoic acid from octanoyl-acyl-carrier-protein onto the lipoyl domains of lipoate-dependent enzymes. Lipoyl-ACP can also act as a substrate although octanoyl-ACP is likely to be the physiological substrate. The polypeptide is Octanoyltransferase (Leptospira interrogans serogroup Icterohaemorrhagiae serovar copenhageni (strain Fiocruz L1-130)).